The following is a 413-amino-acid chain: Glucose-1-phosphatase (413 aa).

Positions 1 to 22 (MKKSLLAVAVAGAVLLSSAVQA) are cleaved as a signal peptide. Arginine 39 provides a ligand contact to substrate. The active-site Nucleophile is histidine 40. Arginine 43, arginine 116, and glutamate 218 together coordinate substrate. Residue aspartate 312 is the Proton donor of the active site.

The protein belongs to the histidine acid phosphatase family. Homodimer.

The protein resides in the periplasm. It catalyses the reaction alpha-D-glucose 1-phosphate + H2O = D-glucose + phosphate. This is Glucose-1-phosphatase (agp) from Salmonella typhimurium (strain LT2 / SGSC1412 / ATCC 700720).